The chain runs to 940 residues: Acetyl-coenzyme A synthetase (940 aa).

An N-terminal signal peptide occupies residues 1-33 (MCCAIWSASRAPACSASQLSSSHAVRPSVVPDA). The interval 1–289 (MCCAIWSASR…VQRSVTRLTA (289 aa)) is unknown. Disordered stretches follow at residues 70–127 (TARA…RPRC), 157–202 (VAPP…ADSA), and 224–274 (ASSQ…QQTC). 2 stretches are compositionally biased toward polar residues: residues 72-95 (RATT…TAAS) and 107-120 (SSIS…TSGS). 2 stretches are compositionally biased toward low complexity: residues 184-202 (TAPP…ADSA) and 224-245 (ASSQ…SGRS). The span at 258-274 (SSPTVQRNQTTVHQQTC) shows a compositional bias: polar residues. The interval 290–940 (MSNPSHAEVP…SVFEAIRASK (651 aa)) is acetyl-coenzyme A synthetase. CoA contacts are provided by residues 480–483 (RRGK) and T599. Residues 675-677 (GEP), 699-704 (DTWWQT), D796, and R811 each bind ATP. Residue S819 coordinates CoA. R822 provides a ligand contact to ATP. Residues V833, H835, and V838 each contribute to the Mg(2+) site. Residue K906 is modified to N6-acetyllysine.

It belongs to the ATP-dependent AMP-binding enzyme family. Mg(2+) serves as cofactor. Post-translationally, acetylated on Lys-906 by Pat in the presence of acetyl-CoA as an acetyl donor and ATP. Acetylation results in the inactivation of the enzyme. Deacetylation by the SIR2-homolog deacetylase CobB is required to activate the enzyme.

It carries out the reaction acetate + ATP + CoA = acetyl-CoA + AMP + diphosphate. In terms of biological role, catalyzes the conversion of acetate into acetyl-CoA (AcCoA), an essential intermediate at the junction of anabolic and catabolic pathways. AcsA undergoes a two-step reaction. In the first half reaction, AcsA combines acetate with ATP to form acetyl-adenylate (AcAMP) intermediate. In the second half reaction, it can then transfer the acetyl group from AcAMP to the sulfhydryl group of CoA, forming the product AcCoA. The sequence is that of Acetyl-coenzyme A synthetase (acsA) from Mycolicibacterium smegmatis (strain ATCC 700084 / mc(2)155) (Mycobacterium smegmatis).